The sequence spans 410 residues: Magnesium transporter NIPA3 (410 aa).

The Extracellular segment spans residues 1 to 67 (MGAQVRLPPG…ISANVENKYS (67 aa)). Asn-25, Asn-35, Asn-50, and Asn-55 each carry an N-linked (GlcNAc...) asparagine glycan. A helical membrane pass occupies residues 68-88 (LYVGLVLAVSSSIFIGSSFIL). Over 89–114 (KKKGLLQLASKGFTRAGQGGHSYLKE) the chain is Cytoplasmic. Residues 115 to 135 (WLWWVGLLSMGAGEAANFAAY) form a helical membrane-spanning segment. A topological domain (extracellular) is located at residue Ala-136. Residues 137–157 (FAPATLVTPLGALSVLISAIL) form a helical membrane-spanning segment. At 158–165 (SSYFLNEH) the chain is on the cytoplasmic side. A helical transmembrane segment spans residues 166-186 (LNIHGKIGCILSILGSTVMVI). At 187 to 207 (HAPQEEEVTSLHEMEMKLRDP) the chain is on the extracellular side. Residues 208 to 228 (GFISFAVIITVISLVLILIVA) traverse the membrane as a helical segment. Over 229-233 (PKKGQ) the chain is Cytoplasmic. A helical membrane pass occupies residues 234 to 254 (TNILVYISICSLIGAFSVSSV). The Extracellular segment spans residues 255–273 (KGLGIAIKELIEWKPVYKH). The chain crosses the membrane as a helical span at residues 274–294 (PLVFVLLAVLVLSVTTQINYL). Residues 295 to 305 (NKALDTFNTSL) lie on the Cytoplasmic side of the membrane. Residues 306–326 (VTPIYYVFFTSMVVTCSAILF) form a helical membrane-spanning segment. Residues 327–336 (QEWYGMTAGD) are Extracellular-facing. Residues 337-357 (IIGTLSGFFTIIIGIFLLHAF) form a helical membrane-spanning segment. At 358–410 (KNTDITWSELTSTAKKEAVSLNVNENNYVLLENLECSAPGYNDDVTLFSRTDD) the chain is on the cytoplasmic side.

This sequence belongs to the NIPA family. In terms of tissue distribution, expressed in the pancreatic islets.

The protein localises to the golgi apparatus membrane. The enzyme catalyses Mg(2+)(in) = Mg(2+)(out). Acts as a Mg(2+) transporter. Can also transport other divalent cations such as Fe(2+), Sr(2+), Ba(2+), Mn(2+), Cu(2+) and Co(2+) but to a much less extent than Mg(2+). In Homo sapiens (Human), this protein is Magnesium transporter NIPA3 (NIPAL1).